The sequence spans 376 residues: 12-oxophytodienoate reductase 1 (376 aa).

FMN-binding positions include 35 to 37, Ala-68, and Gln-110; that span reads PLT. Residues Ser-143 and 187–190 contribute to the substrate site; that span reads HGAH. Residue Tyr-192 is the Proton donor of the active site. Residue Arg-239 coordinates FMN. Arg-279 lines the substrate pocket. Residues Gly-309 and 330–331 each bind FMN; that span reads GR.

Belongs to the NADH:flavin oxidoreductase/NADH oxidase family. It depends on FMN as a cofactor. In terms of tissue distribution, constitutively expressed in roots, leaves, cotyledons, cells culture and to a lower extent in flowers.

The protein localises to the cytoplasm. The enzyme catalyses (1S,2S)-OPC-8 + NADP(+) = (9S,13S,15Z)-12-oxophyto-10,15-dienoate + NADPH + H(+). Its pathway is lipid metabolism; oxylipin biosynthesis. In terms of biological role, specifically cleaves olefinic bonds in alpha,beta-unsaturated carbonyls and may be involved in detoxification or modification of these reactive compounds. May be involved in the biosynthesis or metabolism of oxylipin signaling molecules. In vitro, reduces 9R,13R-12-oxophyodienoic acid (9R,13R-OPDA) to 9R,13R-OPC-8:0, but not 9S,13S-OPDA, the natural precursor of jasmonic acid. Also reduces N-ethylmaleimide and maleic acid. The chain is 12-oxophytodienoate reductase 1 (OPR1) from Solanum lycopersicum (Tomato).